Here is a 56-residue protein sequence, read N- to C-terminus: Mitoregulin (56 aa).

Over Ala2 to Leu9 the chain is Mitochondrial matrix. Residues Gln10 to Ala27 traverse the membrane as a helical segment. At Asn28–Ala56 the chain is on the mitochondrial intermembrane side.

As to quaternary structure, interacts with mitochondrial trifunctional enzyme, a heterotetrameric complex composed of 2 HADHA subunits and 2 HADHB subunits. Interacts with cytochrome b5 reductase CYB5R3; the interaction is required to maintain cellular lipid composition and leads to stimulation of mitochondrial respiratory complex I activity. Interacts with ATP synthase subunit ATP5F1B/ATP5B.

The protein resides in the mitochondrion inner membrane. Functionally, positively regulates mitochondrial complex assembly and/or stability. Increases mitochondrial membrane potential while decreasing mitochondrial reactive oxygen species. Increases mitochondrial respiration rate. Increased mitochondrial respiratory activity promotes myogenic differentiation which facilitates muscle growth and regeneration. Increases mitochondrial calcium retention capacity. Plays a role in maintenance of cellular lipid composition through its interaction with cytochrome b5 reductase CYB5R3 which is required for mitochondrial respiratory complex I activity. Interacts with the mitochondrial trifunctional enzyme complex (MTE) and enhances fatty acid beta-oxidation. Not required for MTE formation or stability. Modulates triglyceride clearance in adipocytes through its role in regulating fatty acid beta-oxidation and lipolysis. This is Mitoregulin from Homo sapiens (Human).